A 415-amino-acid polypeptide reads, in one-letter code: Squalene synthase 2 (415 aa).

Helical transmembrane passes span 281–301 and 392–412; these read AIFR…ALCY and LIVI…SNLP.

The protein belongs to the phytoene/squalene synthase family. Mg(2+) is required as a cofactor. Mn(2+) serves as cofactor.

The protein resides in the endoplasmic reticulum membrane. It catalyses the reaction 2 (2E,6E)-farnesyl diphosphate + NADH + H(+) = squalene + 2 diphosphate + NAD(+). The enzyme catalyses 2 (2E,6E)-farnesyl diphosphate + NADPH + H(+) = squalene + 2 diphosphate + NADP(+). It functions in the pathway terpene metabolism; lanosterol biosynthesis; lanosterol from farnesyl diphosphate: step 1/3. In terms of biological role, component of the triterpene saponins (e.g. ginsenosides or panaxosides) and phytosterols biosynthetic pathways. Catalyzes the biosynthesis of squalene. The sequence is that of Squalene synthase 2 from Panax ginseng (Korean ginseng).